Consider the following 171-residue polypeptide: Small ribosomal subunit protein mS25 (171 aa).

The protein belongs to the mitochondrion-specific ribosomal protein mS25 family. As to quaternary structure, component of the mitochondrial ribosome small subunit (28S) which comprises a 12S rRNA and about 30 distinct proteins.

It localises to the mitochondrion. The polypeptide is Small ribosomal subunit protein mS25 (Mrps25) (Mus musculus (Mouse)).